The primary structure comprises 359 residues: tRNA/tmRNA (uracil-C(5))-methyltransferase (359 aa).

5 residues coordinate S-adenosyl-L-methionine: Gln-183, Tyr-211, Asn-216, Glu-232, and Asp-292. Cys-317 (nucleophile) is an active-site residue. Catalysis depends on Glu-351, which acts as the Proton acceptor.

This sequence belongs to the class I-like SAM-binding methyltransferase superfamily. RNA M5U methyltransferase family. TrmA subfamily.

The catalysed reaction is uridine(54) in tRNA + S-adenosyl-L-methionine = 5-methyluridine(54) in tRNA + S-adenosyl-L-homocysteine + H(+). The enzyme catalyses uridine(341) in tmRNA + S-adenosyl-L-methionine = 5-methyluridine(341) in tmRNA + S-adenosyl-L-homocysteine + H(+). In terms of biological role, dual-specificity methyltransferase that catalyzes the formation of 5-methyluridine at position 54 (m5U54) in all tRNAs, and that of position 341 (m5U341) in tmRNA (transfer-mRNA). The protein is tRNA/tmRNA (uracil-C(5))-methyltransferase of Pseudomonas fluorescens (strain Pf0-1).